The chain runs to 554 residues: Glucose-6-phosphate isomerase (554 aa).

Glu-359 functions as the Proton donor in the catalytic mechanism. Residues His-390 and Lys-518 contribute to the active site.

Belongs to the GPI family.

It is found in the cytoplasm. It carries out the reaction alpha-D-glucose 6-phosphate = beta-D-fructose 6-phosphate. The protein operates within carbohydrate biosynthesis; gluconeogenesis. It functions in the pathway carbohydrate degradation; glycolysis; D-glyceraldehyde 3-phosphate and glycerone phosphate from D-glucose: step 2/4. Its function is as follows. Catalyzes the reversible isomerization of glucose-6-phosphate to fructose-6-phosphate. This chain is Glucose-6-phosphate isomerase, found in Pseudomonas fluorescens (strain SBW25).